The sequence spans 750 residues: uncharacterized protein (750 aa).

3 helical membrane-spanning segments follow: residues 1 to 21 (MSII…SIVT), 465 to 485 (YGAN…ISYL), and 586 to 606 (GMFG…VAVS).

It is found in the membrane. This is an uncharacterized protein from Saccharomyces cerevisiae (strain ATCC 204508 / S288c) (Baker's yeast).